Consider the following 188-residue polypeptide: Elongation factor P (188 aa).

Belongs to the elongation factor P family.

It localises to the cytoplasm. It functions in the pathway protein biosynthesis; polypeptide chain elongation. Involved in peptide bond synthesis. Stimulates efficient translation and peptide-bond synthesis on native or reconstituted 70S ribosomes in vitro. Probably functions indirectly by altering the affinity of the ribosome for aminoacyl-tRNA, thus increasing their reactivity as acceptors for peptidyl transferase. In Rickettsia typhi (strain ATCC VR-144 / Wilmington), this protein is Elongation factor P.